Here is an 89-residue protein sequence, read N- to C-terminus: Small ribosomal subunit protein uS15 (89 aa).

This sequence belongs to the universal ribosomal protein uS15 family. As to quaternary structure, part of the 30S ribosomal subunit. Forms a bridge to the 50S subunit in the 70S ribosome, contacting the 23S rRNA.

In terms of biological role, one of the primary rRNA binding proteins, it binds directly to 16S rRNA where it helps nucleate assembly of the platform of the 30S subunit by binding and bridging several RNA helices of the 16S rRNA. Functionally, forms an intersubunit bridge (bridge B4) with the 23S rRNA of the 50S subunit in the ribosome. This chain is Small ribosomal subunit protein uS15, found in Rhizobium etli (strain CIAT 652).